The chain runs to 143 residues: Sporulation-specific cell division protein SsgB (143 aa).

This sequence belongs to the SsgA family. In terms of assembly, interacts with SsgA. Interacts with FtsZ (via N-terminus).

The protein resides in the cell septum. Involved in sporulation-specific cell division. Required for early stages of sporulation. Important in the process of growth cessation prior to sporulation-specific cell division. Recruits cell division protein FtsZ to the future septum sites and tethers the contractile ring structure (Z ring) to the cytoplasmic membrane during sporulation. Stimulates polymerization and filament length of FtsZ in vitro. This is Sporulation-specific cell division protein SsgB from Salinispora tropica (strain ATCC BAA-916 / DSM 44818 / JCM 13857 / NBRC 105044 / CNB-440).